A 401-amino-acid polypeptide reads, in one-letter code: Anhydro-N-acetylmuramic acid kinase (401 aa).

Position 25-32 (25-32 (GTSLDGLD)) interacts with ATP.

It belongs to the anhydro-N-acetylmuramic acid kinase family.

The enzyme catalyses 1,6-anhydro-N-acetyl-beta-muramate + ATP + H2O = N-acetyl-D-muramate 6-phosphate + ADP + H(+). It participates in amino-sugar metabolism; 1,6-anhydro-N-acetylmuramate degradation. It functions in the pathway cell wall biogenesis; peptidoglycan recycling. Functionally, catalyzes the specific phosphorylation of 1,6-anhydro-N-acetylmuramic acid (anhMurNAc) with the simultaneous cleavage of the 1,6-anhydro ring, generating MurNAc-6-P. Is required for the utilization of anhMurNAc either imported from the medium or derived from its own cell wall murein, and thus plays a role in cell wall recycling. In Pseudoalteromonas atlantica (strain T6c / ATCC BAA-1087), this protein is Anhydro-N-acetylmuramic acid kinase.